The following is a 62-amino-acid chain: Large ribosomal subunit protein bL32 (62 aa).

Residues 1–20 are disordered; sequence MAVPARHTSKQKKRSRRGHI. The span at 7-20 shows a compositional bias: basic residues; that stretch reads HTSKQKKRSRRGHI.

Belongs to the bacterial ribosomal protein bL32 family.

The chain is Large ribosomal subunit protein bL32 from Lactobacillus acidophilus (strain ATCC 700396 / NCK56 / N2 / NCFM).